The sequence spans 201 residues: Imidazole glycerol phosphate synthase subunit HisH 1 (201 aa).

A Glutamine amidotransferase type-1 domain is found at 1-201 (MIALIDYKAG…LKLLENFIRL (201 aa)). Cys80 functions as the Nucleophile in the catalytic mechanism. Catalysis depends on residues His183 and Glu185.

As to quaternary structure, heterodimer of HisH and HisF.

It is found in the cytoplasm. The catalysed reaction is 5-[(5-phospho-1-deoxy-D-ribulos-1-ylimino)methylamino]-1-(5-phospho-beta-D-ribosyl)imidazole-4-carboxamide + L-glutamine = D-erythro-1-(imidazol-4-yl)glycerol 3-phosphate + 5-amino-1-(5-phospho-beta-D-ribosyl)imidazole-4-carboxamide + L-glutamate + H(+). It catalyses the reaction L-glutamine + H2O = L-glutamate + NH4(+). The protein operates within amino-acid biosynthesis; L-histidine biosynthesis; L-histidine from 5-phospho-alpha-D-ribose 1-diphosphate: step 5/9. Its function is as follows. IGPS catalyzes the conversion of PRFAR and glutamine to IGP, AICAR and glutamate. The HisH subunit provides the glutamine amidotransferase activity that produces the ammonia necessary to HisF for the synthesis of IGP and AICAR. The polypeptide is Imidazole glycerol phosphate synthase subunit HisH 1 (Campylobacter jejuni (strain RM1221)).